The following is a 177-amino-acid chain: ATP synthase subunit delta (177 aa).

The protein belongs to the ATPase delta chain family. As to quaternary structure, F-type ATPases have 2 components, F(1) - the catalytic core - and F(0) - the membrane proton channel. F(1) has five subunits: alpha(3), beta(3), gamma(1), delta(1), epsilon(1). F(0) has three main subunits: a(1), b(2) and c(10-14). The alpha and beta chains form an alternating ring which encloses part of the gamma chain. F(1) is attached to F(0) by a central stalk formed by the gamma and epsilon chains, while a peripheral stalk is formed by the delta and b chains.

The protein localises to the cell inner membrane. Its function is as follows. F(1)F(0) ATP synthase produces ATP from ADP in the presence of a proton or sodium gradient. F-type ATPases consist of two structural domains, F(1) containing the extramembraneous catalytic core and F(0) containing the membrane proton channel, linked together by a central stalk and a peripheral stalk. During catalysis, ATP synthesis in the catalytic domain of F(1) is coupled via a rotary mechanism of the central stalk subunits to proton translocation. In terms of biological role, this protein is part of the stalk that links CF(0) to CF(1). It either transmits conformational changes from CF(0) to CF(1) or is implicated in proton conduction. The protein is ATP synthase subunit delta of Serratia proteamaculans (strain 568).